A 131-amino-acid polypeptide reads, in one-letter code: D-ribose pyranase (131 aa).

Catalysis depends on histidine 20, which acts as the Proton donor. Residues aspartate 28, histidine 98, and 120-122 (FSN) contribute to the substrate site.

Belongs to the RbsD / FucU family. RbsD subfamily. Homodecamer.

The protein resides in the cytoplasm. The catalysed reaction is beta-D-ribopyranose = beta-D-ribofuranose. Its pathway is carbohydrate metabolism; D-ribose degradation; D-ribose 5-phosphate from beta-D-ribopyranose: step 1/2. In terms of biological role, catalyzes the interconversion of beta-pyran and beta-furan forms of D-ribose. This chain is D-ribose pyranase, found in Oenococcus oeni (strain ATCC BAA-331 / PSU-1).